A 733-amino-acid chain; its full sequence is Centrosomal protein of 68 kDa (733 aa).

Residues 71-80 show a composition bias toward basic and acidic residues; sequence SKEPVADRSK. Disordered regions lie at residues 71–92, 150–207, and 222–244; these read SKEP…SASV, GLSQ…SFAN, and VVGA…DATG. Residues 178 to 190 are compositionally biased toward low complexity; sequence SSRSISASSVGSS. The segment covering 231–241 has biased composition (polar residues); it reads GSAQPLTSGSD. S315 is subject to Phosphoserine. The tract at residues 420–442 is disordered; it reads PQLKTKEKEPPFPRQKRGRQHVS. Residues S453 and S459 each carry the phosphoserine modification. A disordered region spans residues 497–571; sequence HSSLQVSDSD…KPLKTQPASK (75 aa). The segment covering 540 to 569 has biased composition (polar residues); it reads IQPQDSRGKSSLMSNQTLGVSSKPLKTQPA.

As to quaternary structure, interacts with CNTLN; the interaction recruits CEP68 to the centrosome. Interacts with the SCF(FBXW11) complex which contains SKP1, CUL1 and FBXW11; the interaction is probably mediated by FBXW11 and the complex also contains CDK5RAP2 and PCNT. Also interacts with F-box protein BTRC. Interacts with serine/threonine-protein kinase PLK1; the interaction leads to phosphorylation of CEP68 and its subsequent degradation. Interacts with NEK2; the interaction leads to phosphorylation of CEP68. Phosphorylation by PLK1 is required for binding to BTRC in prometaphase. Phosphorylated directly or indirectly by NEK2. NEK2-mediated phosphorylation promotes CEP68 dissociation from the centrosome and its degradation at the onset of mitosis. In terms of processing, ubiquitinated and targeted for proteasomal degradation in early mitosis by the SCF(BTRC) and/or SCF(FBXW11) E3 ubiquitin-protein ligase complexes. Degradation is complete by prometaphase and is required for removal of CDK5RAP2 from the peripheral pericentriolar material and subsequent centriole separation.

The protein resides in the cytoplasm. It localises to the cytoskeleton. Its subcellular location is the microtubule organizing center. It is found in the centrosome. Its function is as follows. Involved in maintenance of centrosome cohesion, probably as part of a linker structure which prevents centrosome splitting. Required for localization of CDK5RAP2 to the centrosome during interphase. Contributes to CROCC/rootletin filament formation. This chain is Centrosomal protein of 68 kDa (Cep68), found in Mus musculus (Mouse).